Here is a 100-residue protein sequence, read N- to C-terminus: Urease subunit gamma 2 (100 aa).

This sequence belongs to the urease gamma subunit family. As to quaternary structure, heterotrimer of UreA (gamma), UreB (beta) and UreC (alpha) subunits. Three heterotrimers associate to form the active enzyme.

It localises to the cytoplasm. It catalyses the reaction urea + 2 H2O + H(+) = hydrogencarbonate + 2 NH4(+). It functions in the pathway nitrogen metabolism; urea degradation; CO(2) and NH(3) from urea (urease route): step 1/1. In terms of biological role, disrupting the ure2 operon has no effect on urease activity or pathogen survival in BALB/c mice when administered orally. The sequence is that of Urease subunit gamma 2 from Brucella abortus (strain 2308).